The following is a 342-amino-acid chain: DNA primase small subunit PriS (342 aa).

Residues Asp-97, Asp-99, and Asp-236 contribute to the active site.

Belongs to the eukaryotic-type primase small subunit family. As to quaternary structure, heterodimer of a small subunit (PriS) and a large subunit (PriL). It depends on Mg(2+) as a cofactor. Mn(2+) is required as a cofactor.

In terms of biological role, catalytic subunit of DNA primase, an RNA polymerase that catalyzes the synthesis of short RNA molecules used as primers for DNA polymerase during DNA replication. The small subunit contains the primase catalytic core and has DNA synthesis activity on its own. Binding to the large subunit stabilizes and modulates the activity, increasing the rate of DNA synthesis while decreasing the length of the DNA fragments, and conferring RNA synthesis capability. The DNA polymerase activity may enable DNA primase to also catalyze primer extension after primer synthesis. May also play a role in DNA repair. The chain is DNA primase small subunit PriS from Aeropyrum pernix (strain ATCC 700893 / DSM 11879 / JCM 9820 / NBRC 100138 / K1).